A 365-amino-acid polypeptide reads, in one-letter code: Neuronal migration protein doublecortin (365 aa).

The segment at 11–31 (RDKTSRNMRGSRMNGLPSPTH) is disordered. The residue at position 14 (Thr14) is a Phosphothreonine; by PKC. Ser28 bears the Phosphoserine; by CDK5 mark. Residue Ser47 is modified to Phosphoserine; by MARK1 and PKA. Doublecortin domains lie at 53 to 139 (KKVR…VEYT) and 180 to 263 (KLVT…AQDD). Tyr70 is subject to Phosphotyrosine; by ABL. Ser74 is modified (phosphoserine; by PKC). Ser90 carries the post-translational modification Phosphoserine; by CK2. Ser110 is modified (phosphoserine; by PKC). Ser115 carries the post-translational modification Phosphoserine; by CK2, MARK1 and PKA. At Ser265 the chain carries Phosphoserine; by CK2. The tract at residues 275-365 (KGNPSATAGP…DDSDSLGDSM (91 aa)) is disordered. Ser287 is modified (phosphoserine; by CDK5). Thr289 is modified (phosphothreonine; by CDK5). Ser294 is subject to Phosphoserine; by PKC. Phosphoserine; by CDK5 is present on Ser297. The residue at position 306 (Ser306) is a Phosphoserine; by CK2. Ser306 bears the Phosphoserine; by DYRK2 mark. The span at 307–341 (PADSGNDQDANGTSSSQLSTPKSKQSPISTPTSPG) shows a compositional bias: polar residues. Thr326 carries the phosphothreonine; by CDK5 modification. Thr326 carries the phosphothreonine; by PKC and MAPK modification. Position 332 is a phosphoserine; by CDK5 (Ser332). Ser332 carries the post-translational modification Phosphoserine; by MAPK. A Phosphothreonine; by MAPK modification is found at Thr336. At Ser339 the chain carries Phosphoserine; by CDK5. Ser339 carries the phosphoserine; by MAPK modification. Position 342 is a phosphoserine; by PKC (Ser342). Phosphoserine; by CK2 is present on residues Ser354 and Ser360. Residues 356–365 (DDSDSLGDSM) are compositionally biased toward acidic residues.

Interacts with tubulin. Interacts with USP9X. Post-translationally, phosphorylation by MARK1, MARK2 and PKA regulates its ability to bind microtubules. Phosphorylation at Ser-265 and Ser-297 seems to occur only in neonatal brain, the levels falling precipitously by postnatal day 21. Ubiquitinated by MDM2, leading to its degradation by the proteasome. Ubiquitinated by MDM2 and subsequent degradation leads to reduce the dendritic spine density of olfactory bulb granule cells. In terms of tissue distribution, highly expressed in neuronal cells of fetal brain (in the majority of cells of the cortical plate, intermediate zone and ventricular zone), but not expressed in other fetal tissues. In the adult, highly expressed in the brain frontal lobe, but very low expression in other regions of brain, and not detected in heart, placenta, lung, liver, skeletal muscles, kidney and pancreas.

Its subcellular location is the cytoplasm. It localises to the cell projection. The protein resides in the neuron projection. Microtubule-associated protein required for initial steps of neuronal dispersion and cortex lamination during cerebral cortex development. May act by competing with the putative neuronal protein kinase DCLK1 in binding to a target protein. May in that way participate in a signaling pathway that is crucial for neuronal interaction before and during migration, possibly as part of a calcium ion-dependent signal transduction pathway. May be part with PAFAH1B1/LIS-1 of overlapping, but distinct, signaling pathways that promote neuronal migration. The sequence is that of Neuronal migration protein doublecortin (DCX) from Homo sapiens (Human).